The chain runs to 345 residues: NADH-ubiquinone oxidoreductase chain 2 (345 aa).

9 consecutive transmembrane segments (helical) span residues 1–21 (MNPI…VLTM), 60–80 (FLIQ…NAHL), 110–130 (PIHF…ALII), 149–169 (IPTP…GLGG), 179–196 (MAFS…IITI), 200–222 (LTLF…MHLT), 240–260 (TANL…LSGF), 274–294 (NLVP…MFYL), and 323–343 (TTML…TPTM).

It belongs to the complex I subunit 2 family.

The protein resides in the mitochondrion inner membrane. It carries out the reaction a ubiquinone + NADH + 5 H(+)(in) = a ubiquinol + NAD(+) + 4 H(+)(out). Core subunit of the mitochondrial membrane respiratory chain NADH dehydrogenase (Complex I) that is believed to belong to the minimal assembly required for catalysis. Complex I functions in the transfer of electrons from NADH to the respiratory chain. The immediate electron acceptor for the enzyme is believed to be ubiquinone. This chain is NADH-ubiquinone oxidoreductase chain 2 (MT-ND2), found in Varanus melinus (Quince monitor lizard).